Here is a 265-residue protein sequence, read N- to C-terminus: Uronate dehydrogenase (265 aa).

NAD(+) is bound by residues 12 to 13 (QL), 32 to 34 (DLS), 49 to 50 (DL), and 69 to 73 (LGGIS). Residues serine 73 and 109–111 (SNH) each bind substrate. Tyrosine 134 functions as the Proton acceptor in the catalytic mechanism. Position 138 (lysine 138) interacts with NAD(+). Serine 163 serves as a coordination point for substrate. Cysteine 164 contacts NAD(+). Arginine 172 is a substrate binding site.

It belongs to the NAD(P)-dependent epimerase/dehydratase family. In terms of assembly, homohexamer.

It catalyses the reaction beta-D-galacturonate + NAD(+) = D-galactaro-1,5-lactone + NADH + H(+). It carries out the reaction beta-D-glucuronate + NAD(+) = D-glucaro-1,5-lactone + NADH + H(+). It participates in carbohydrate acid metabolism; D-galacturonate degradation via prokaryotic oxidative pathway. Functionally, catalyzes the oxidation of D-galacturonate and D-glucuronate to galactarate and D-glucarate, respectively. In fact, in water solution the substrate D-galacturonate is predominantly in pyranosic form whose beta anomer is converted by the enzyme to D-galactaro-1,5-lactone; in solution, this reaction product rearranges to the more stable D-galactaro-1,4-lactone. Makes part of the oxidative degradation pathway of D-galacturonate, which allows A.tumefaciens to utilize D-galacturonate as a sole carbon source. Cannot use NADP(+) instead of NAD(+) as cosubstrate. Is not active on D-galactose, D-glucose, D-galactonate and D-gluconate. The sequence is that of Uronate dehydrogenase (udh) from Agrobacterium fabrum (strain C58 / ATCC 33970) (Agrobacterium tumefaciens (strain C58)).